A 331-amino-acid polypeptide reads, in one-letter code: Elongation factor Ts, mitochondrial (331 aa).

Positions 254 to 295 (SPLTVGEMPEVREEEGEKKDGDKQDEEERSTDSDEDETQMLR) are disordered. The span at 262–275 (PEVREEEGEKKDGD) shows a compositional bias: basic and acidic residues. The span at 276 to 291 (KQDEEERSTDSDEDET) shows a compositional bias: acidic residues.

Belongs to the EF-Ts family.

The protein localises to the mitochondrion. Functionally, associates with the EF-Tu.GDP complex and induces the exchange of GDP to GTP. It remains bound to the aminoacyl-tRNA.EF-Tu.GTP complex up to the GTP hydrolysis stage on the ribosome. This is Elongation factor Ts, mitochondrial from Branchiostoma floridae (Florida lancelet).